Consider the following 37-residue polypeptide: DICDIAIAQCSLTLCQDCENTPICELAVKGSCPPPWS.

3 disulfide bridges follow: Cys3–Cys18, Cys10–Cys32, and Cys15–Cys24.

It localises to the secreted. Functionally, mating ciliate pheromones (or gamones) are diffusible extracellular communication signals that distinguish different intraspecific classes of cells commonly referred to as 'mating types'. They prepare the latter for conjugation by changing their cell surface properties. This Euplotes raikovi protein is Mating pheromone Er-22 (MAT22).